The following is a 721-amino-acid chain: Catalase-peroxidase (721 aa).

The tryptophyl-tyrosyl-methioninium (Trp-Tyr) (with M-249) cross-link spans 95–223 (WHSAGSYRLF…LGAVHMGLIY (129 aa)). The active-site Proton acceptor is the His-96. The tryptophyl-tyrosyl-methioninium (Tyr-Met) (with W-95) cross-link spans 223 to 249 (YVNPQGRDGKPDPLKSAHDVRVTFKRM). Residue His-264 coordinates heme b.

It belongs to the peroxidase family. Peroxidase/catalase subfamily. In terms of assembly, homodimer or homotetramer. Heme b serves as cofactor. In terms of processing, formation of the three residue Trp-Tyr-Met cross-link is important for the catalase, but not the peroxidase activity of the enzyme.

The enzyme catalyses H2O2 + AH2 = A + 2 H2O. The catalysed reaction is 2 H2O2 = O2 + 2 H2O. In terms of biological role, bifunctional enzyme with both catalase and broad-spectrum peroxidase activity. This chain is Catalase-peroxidase, found in Parvibaculum lavamentivorans (strain DS-1 / DSM 13023 / NCIMB 13966).